A 637-amino-acid chain; its full sequence is MTLLDSVHNPDDLKKLPDSQLPQLAAEIREFLISQVARTGGHLGPNLGVVELTIALHRVFDSPRDPILFDTGHQAYVHKILTGRKDFSKLRKEGGLSGYPSRAESEHDFIENSHASTALSYADGLARAYELQGITDRTVVALVGDGALTGGMAWEALNNIAEGKNRRIVIVVNDNGRSYSPTIGGLAEHFANLRMTRGYEQMLATAKNAINRAPVVGPPLYDALHAFKKGLKDAIQPQMMFEDLGLKYVGPIDGHDVAAVERALRRARDFGAPVIVHVLTQKGKGYAPAENHDEDQFHALGAFDVATGRPQSTPGLKWTSVFSDEMVRIGAEREDVVAITAAMLHPTGLAAFAEAYPDRVFDVGIAEQHAATCAAGLAMGGLHPVVAVYATFLNRCFDQVLMDVALHRQPVTFALDRAGITGDDGASHNGMWDLSILQVVPNLSIAVPRDAVRLRELLREAISIDDGPTVVRYPKGVVPPAIPAVDQIGGMDVLRRPASGTEAPDLLLVAVGPMAQTCCEVADRLADQGIGVTVVDPRWVKPLDPALVSEAARHSVVAVVEDNGRVGAVGDAVARALRDADLDIPVRTFGIEQRFLEHAKRDRILAQMGLDAQGLARKLTEIVAQRAEQSLEDEPAS.

Thiamine diphosphate is bound by residues His73 and 113-115 (SHA). Asp145 lines the Mg(2+) pocket. Residues 146 to 147 (GA), Asn175, Tyr286, and Glu367 each bind thiamine diphosphate. A Mg(2+)-binding site is contributed by Asn175.

This sequence belongs to the transketolase family. DXPS subfamily. As to quaternary structure, homodimer. The cofactor is Mg(2+). Thiamine diphosphate serves as cofactor.

The catalysed reaction is D-glyceraldehyde 3-phosphate + pyruvate + H(+) = 1-deoxy-D-xylulose 5-phosphate + CO2. It participates in metabolic intermediate biosynthesis; 1-deoxy-D-xylulose 5-phosphate biosynthesis; 1-deoxy-D-xylulose 5-phosphate from D-glyceraldehyde 3-phosphate and pyruvate: step 1/1. Catalyzes the acyloin condensation reaction between C atoms 2 and 3 of pyruvate and glyceraldehyde 3-phosphate to yield 1-deoxy-D-xylulose-5-phosphate (DXP). The chain is 1-deoxy-D-xylulose-5-phosphate synthase from Thermobifida fusca (strain YX).